The primary structure comprises 392 residues: Bone morphogenetic protein 15 (392 aa).

The N-terminal stretch at 1-25 (MALLTILRILLWGVVLFMEQRVQMA) is a signal peptide. The propeptide occupies 26–267 (KPGWPSTALL…ESSFLMRSVR (242 aa)). 5 N-linked (GlcNAc...) asparagine glycosylation sites follow: Asn-85, Asn-213, Asn-236, Asn-349, and Asn-373. Intrachain disulfides connect Cys-291/Cys-357, Cys-320/Cys-389, and Cys-324/Cys-391.

It belongs to the TGF-beta family. In terms of assembly, homodimer. But, in contrast to other members of this family, cannot be disulfide-linked. Ovary specific.

Its subcellular location is the secreted. May be involved in follicular development. Oocyte-specific growth/differentiation factor that stimulates folliculogenesis and granulosa cell (GC) growth. This chain is Bone morphogenetic protein 15 (Bmp15), found in Mus musculus (Mouse).